Consider the following 316-residue polypeptide: Serpentine receptor class gamma-4 (316 aa).

A run of 7 helical transmembrane segments spans residues 21–41 (FVYL…IWGT), 50–70 (SFFT…FLDV), 99–121 (IVYP…LSIN), 140–160 (MKKV…NVII), 188–208 (FQII…SITL), 229–249 (TAWI…FAFF), and 258–278 (IFYI…PIVM).

The protein belongs to the nematode receptor-like protein srg family.

The protein resides in the membrane. This chain is Serpentine receptor class gamma-4 (srg-4), found in Caenorhabditis elegans.